We begin with the raw amino-acid sequence, 242 residues long: MRCFKATIAYDGAYFLGYAKQPNKLGVQDKIENALNTLGIKSVVVAAGRTDKGVHANNQVLSFHAPKHWNVAKLFYYLAPKLAPHIVLKKLEEKNFHARFDAQKRAYRYLLTKNLKTPFLAPYIACGDYGSLDLLNSALKQFTGKHDFSLFKKEGGATTNPNRIIFNAFAYTAFIMGHECVVFKIIGDAFLRSSVRLIIQTCVQYSLEKITLAEIEMQIHNIKATIRTPIMADGLYLHRVYY.

The Nucleophile role is filled by aspartate 51. Position 107 (tyrosine 107) interacts with substrate.

The protein belongs to the tRNA pseudouridine synthase TruA family. As to quaternary structure, homodimer.

The enzyme catalyses uridine(38/39/40) in tRNA = pseudouridine(38/39/40) in tRNA. Formation of pseudouridine at positions 38, 39 and 40 in the anticodon stem and loop of transfer RNAs. In Helicobacter pylori (strain HPAG1), this protein is tRNA pseudouridine synthase A.